The primary structure comprises 98 residues: Cystatin-B (98 aa).

Position 1 is an N-acetylmethionine (Met-1). Positions 46–50 (QVVAG) match the Secondary area of contact motif.

It belongs to the cystatin family. As to quaternary structure, able to form dimers stabilized by noncovalent forces.

It is found in the cytoplasm. It localises to the nucleus. Its function is as follows. This is an intracellular thiol proteinase inhibitor. Tightly binding reversible inhibitor of cathepsins L, H and B. The protein is Cystatin-B (CSTB) of Pan troglodytes (Chimpanzee).